Here is a 273-residue protein sequence, read N- to C-terminus: Putative phosphoenolpyruvate synthase regulatory protein (273 aa).

ADP is bound at residue 153-160 (AVSRAGKT).

This sequence belongs to the pyruvate, phosphate/water dikinase regulatory protein family. PSRP subfamily.

It catalyses the reaction [pyruvate, water dikinase] + ADP = [pyruvate, water dikinase]-phosphate + AMP + H(+). It carries out the reaction [pyruvate, water dikinase]-phosphate + phosphate + H(+) = [pyruvate, water dikinase] + diphosphate. Functionally, bifunctional serine/threonine kinase and phosphorylase involved in the regulation of the phosphoenolpyruvate synthase (PEPS) by catalyzing its phosphorylation/dephosphorylation. This is Putative phosphoenolpyruvate synthase regulatory protein from Xylella fastidiosa (strain M23).